A 429-amino-acid polypeptide reads, in one-letter code: Malate dehydrogenase [NADP] 1, chloroplastic (429 aa).

Residues 1 to 40 (MGLSTAYSPVGSHLAPAPLGHRRSAQLHRPRRALLATVRC) constitute a chloroplast transit peptide. Cys64 and Cys69 are oxidised to a cystine. 93 to 99 (GAAGMIS) is a binding site for NADP(+). The substrate site is built by Arg174 and Arg180. NADP(+) is bound by residues Asn187, Gln194, and 211 to 213 (VGN). Substrate is bound by residues Asn213 and Arg244. The active-site Proton acceptor is His269. Cysteines 405 and 417 form a disulfide.

The protein belongs to the LDH/MDH superfamily. MDH type 2 family. In terms of assembly, homodimer.

The protein localises to the plastid. The protein resides in the chloroplast. The enzyme catalyses (S)-malate + NADP(+) = oxaloacetate + NADPH + H(+). Chloroplast NADP-MDH is activated upon illumination. In order to be enzymatically active, disulfide bridges on the protein must be reduced by thioredoxin which receives electrons from ferredoxin and the electron transport system of photosynthesis. In terms of biological role, the chloroplastic, NADP-dependent form is essential for the photosynthesis C4 cycle, which allows plants to circumvent the problem of photorespiration. In C4 plants, NADP-MDH activity acts to convert oxaloacetate to malate in chloroplasts of mesophyll cells for transport to the bundle sheath cells. This Sorghum bicolor (Sorghum) protein is Malate dehydrogenase [NADP] 1, chloroplastic.